The following is a 137-amino-acid chain: Protein cornichon homolog 3 (137 aa).

A run of 3 helical transmembrane segments spans residues 8-28, 54-74, and 113-133; these read IISF…LISL, ILQG…MALL, and LAYI…STLD.

It belongs to the cornichon family.

It is found in the membrane. The polypeptide is Protein cornichon homolog 3 (Arabidopsis thaliana (Mouse-ear cress)).